A 461-amino-acid chain; its full sequence is Probable tubulin polyglutamylase TTLL9 (461 aa).

A compositionally biased stretch (polar residues) spans 1-10; that stretch reads MSRQKSQTSK. The interval 1 to 20 is disordered; the sequence is MSRQKSQTSKGHGASKGKER. A TTL domain is found at 22–402; that stretch reads QRTLIRFKTT…EARLTGKEKR (381 aa). ATP contacts are provided by residues lysine 149 and 155–156; that span reads QG. Glutamine 155 provides a ligand contact to a protein. Residues 186 to 197 are compositionally biased toward polar residues; it reads QATRANVNPSGS. The tract at residues 186–208 is disordered; sequence QATRANVNPSGSHDTRSSDDQKD. A compositionally biased stretch (basic and acidic residues) spans 198-208; it reads HDTRSSDDQKD. ATP is bound by residues 218–221 and 231–233; these read QRYV and KFD. Arginine 257 contacts L-glutamate. 276–277 provides a ligand contact to ATP; that stretch reads TN. Lysine 294 is an L-glutamate binding site. 3 residues coordinate Mg(2+): aspartate 348, glutamate 361, and asparagine 363. Lysine 379 provides a ligand contact to L-glutamate.

This sequence belongs to the tubulin--tyrosine ligase family. Requires Mg(2+) as cofactor.

It localises to the cytoplasm. It is found in the cytoskeleton. The protein resides in the cilium basal body. The protein localises to the flagellum axoneme. The enzyme catalyses (L-glutamyl)(n)-gamma-L-glutamyl-L-glutamyl-[protein] + L-glutamate + ATP = (L-glutamyl)(n+1)-gamma-L-glutamyl-L-glutamyl-[protein] + ADP + phosphate + H(+). Functionally, probable tubulin polyglutamylase that generates side chains of glutamate on the gamma-carboxyl group of specific glutamate residues within the C-terminal tail of target proteins. Similar to TTLL1, may acquire enzymatic activity only in complex with other proteins as it is most likely lacking domains important for autonomous activity. Mediates tubulin polyglutamylation which induces establishment of microtubule heterogeneity in sperm flagella, thereby playing a role in normal motile flagella axoneme structure and sperm flagella beating pattern. The protein is Probable tubulin polyglutamylase TTLL9 (Ttll9) of Rattus norvegicus (Rat).